A 302-amino-acid chain; its full sequence is N-acetylmuramic acid 6-phosphate etherase (302 aa).

One can recognise an SIS domain in the interval Ile58–Lys221. Glu86 serves as the catalytic Proton donor. The active site involves Glu117.

Belongs to the GCKR-like family. MurNAc-6-P etherase subfamily. As to quaternary structure, homodimer.

The catalysed reaction is N-acetyl-D-muramate 6-phosphate + H2O = N-acetyl-D-glucosamine 6-phosphate + (R)-lactate. It participates in amino-sugar metabolism; N-acetylmuramate degradation. In terms of biological role, specifically catalyzes the cleavage of the D-lactyl ether substituent of MurNAc 6-phosphate, producing GlcNAc 6-phosphate and D-lactate. This chain is N-acetylmuramic acid 6-phosphate etherase, found in Clostridium botulinum (strain Loch Maree / Type A3).